A 174-amino-acid chain; its full sequence is Nucleoside-triphosphatase THEP1 (174 aa).

ATP is bound by residues 7–14 and 94–101; these read GRPGVGKT and LIIIDEIG.

This sequence belongs to the THEP1 NTPase family.

The catalysed reaction is a ribonucleoside 5'-triphosphate + H2O = a ribonucleoside 5'-diphosphate + phosphate + H(+). Its function is as follows. Has nucleotide phosphatase activity towards ATP, GTP, CTP, TTP and UTP. May hydrolyze nucleoside diphosphates with lower efficiency. This is Nucleoside-triphosphatase THEP1 from Thermotoga sp. (strain RQ2).